Reading from the N-terminus, the 305-residue chain is MATRHFLTLLDLTPEELSHLIQRAITIKNRLKAQGPTYTPFSNRTLAMFFEKSSTRTRVSFETAMAHFGGHALFLSPRDTQLGRGEPIGDTARVLAEMVDIVMIRTFSHAGLEEYAAASAVPVINALTDDYHPCQLLADVMTWTECRGSVKGKTAVWIGDGNNMCHSWINAARQFDFRLRVCCPPGYEPDADIVAAAGERVEILHDPRQAVQGADLVTTDVWASMGQEEEQARRERDFAGFQVTEKLLDHAADNVLFLHCLPAHRGEEISTTLLDDPRAAVWQEAGNRLHAQKALIEFLLLGKVE.

Carbamoyl phosphate contacts are provided by residues 54–57 (STRT), Gln-81, Arg-105, and 132–135 (HPCQ). L-ornithine-binding positions include Asn-163, Asp-220, and 224 to 225 (SM). Carbamoyl phosphate is bound by residues 260 to 261 (CL) and Arg-288.

This sequence belongs to the aspartate/ornithine carbamoyltransferase superfamily. OTCase family.

The protein resides in the cytoplasm. It catalyses the reaction carbamoyl phosphate + L-ornithine = L-citrulline + phosphate + H(+). The protein operates within amino-acid biosynthesis; L-arginine biosynthesis; L-arginine from L-ornithine and carbamoyl phosphate: step 1/3. Reversibly catalyzes the transfer of the carbamoyl group from carbamoyl phosphate (CP) to the N(epsilon) atom of ornithine (ORN) to produce L-citrulline. The sequence is that of Ornithine carbamoyltransferase from Chromohalobacter salexigens (strain ATCC BAA-138 / DSM 3043 / CIP 106854 / NCIMB 13768 / 1H11).